The sequence spans 283 residues: Pantothenate synthetase (283 aa).

30-37 (MGALHEGH) is an ATP binding site. The active-site Proton donor is histidine 37. Position 61 (glutamine 61) interacts with (R)-pantoate. Glutamine 61 contributes to the beta-alanine binding site. 147 to 150 (GEKD) serves as a coordination point for ATP. Glutamine 153 provides a ligand contact to (R)-pantoate. Residues isoleucine 176 and 184–187 (VSSR) each bind ATP.

The protein belongs to the pantothenate synthetase family. In terms of assembly, homodimer.

It localises to the cytoplasm. It catalyses the reaction (R)-pantoate + beta-alanine + ATP = (R)-pantothenate + AMP + diphosphate + H(+). Its pathway is cofactor biosynthesis; (R)-pantothenate biosynthesis; (R)-pantothenate from (R)-pantoate and beta-alanine: step 1/1. Its function is as follows. Catalyzes the condensation of pantoate with beta-alanine in an ATP-dependent reaction via a pantoyl-adenylate intermediate. The protein is Pantothenate synthetase of Pelodictyon phaeoclathratiforme (strain DSM 5477 / BU-1).